Reading from the N-terminus, the 586-residue chain is Putative Lon protease homolog (586 aa).

Positions 346–543 constitute a Lon proteolytic domain; that stretch reads GERIGQINAL…TDALPLLLNL (198 aa). Catalysis depends on residues S438 and K481.

The protein belongs to the peptidase S16 family.

The chain is Putative Lon protease homolog (ycbZ) from Escherichia coli (strain K12).